A 137-amino-acid chain; its full sequence is Hydrogenase maturation factor HypA (137 aa).

Residue His-2 participates in Ni(2+) binding. Cys-73, Cys-75, Cys-105, and Cys-108 together coordinate Zn(2+).

The protein belongs to the HypA/HybF family.

Functionally, involved in the maturation of [NiFe] hydrogenases. Required for nickel insertion into the metal center of the hydrogenase. The chain is Hydrogenase maturation factor HypA from Methanosarcina mazei (strain ATCC BAA-159 / DSM 3647 / Goe1 / Go1 / JCM 11833 / OCM 88) (Methanosarcina frisia).